A 258-amino-acid chain; its full sequence is 6-phosphogluconolactonase (258 aa).

The protein belongs to the glucosamine/galactosamine-6-phosphate isomerase family. 6-phosphogluconolactonase subfamily.

The catalysed reaction is 6-phospho-D-glucono-1,5-lactone + H2O = 6-phospho-D-gluconate + H(+). It participates in carbohydrate degradation; pentose phosphate pathway; D-ribulose 5-phosphate from D-glucose 6-phosphate (oxidative stage): step 2/3. Functionally, hydrolysis of 6-phosphogluconolactone to 6-phosphogluconate. This is 6-phosphogluconolactonase (pgl) from Chlamydia pneumoniae (Chlamydophila pneumoniae).